A 131-amino-acid chain; its full sequence is Profilin-7 (131 aa).

Cysteines 13 and 115 form a disulfide. The Involved in PIP2 interaction motif lies at 81–97 (AVIRGKKGAGGITIKKT). Phosphothreonine is present on Thr-111.

This sequence belongs to the profilin family. As to quaternary structure, occurs in many kinds of cells as a complex with monomeric actin in a 1:1 ratio. Phosphorylated by MAP kinases.

It localises to the cytoplasm. Its subcellular location is the cytoskeleton. Functionally, binds to actin and affects the structure of the cytoskeleton. At high concentrations, profilin prevents the polymerization of actin, whereas it enhances it at low concentrations. The sequence is that of Profilin-7 from Phleum pratense (Common timothy).